The primary structure comprises 419 residues: Bilin biosynthesis protein CpeY (419 aa).

Its function is as follows. Involved in the biosynthesis of bilin. The chain is Bilin biosynthesis protein CpeY (cpeY) from Synechococcus sp. (strain WH8020).